The following is a 314-amino-acid chain: tRNA dimethylallyltransferase (314 aa).

An ATP-binding site is contributed by 12 to 19 (GPTASGKT). Residue 14–19 (TASGKT) coordinates substrate. Interaction with substrate tRNA regions lie at residues 37–40 (DSAQ) and 161–165 (QRIQR).

The protein belongs to the IPP transferase family. Monomer. The cofactor is Mg(2+).

It catalyses the reaction adenosine(37) in tRNA + dimethylallyl diphosphate = N(6)-dimethylallyladenosine(37) in tRNA + diphosphate. Functionally, catalyzes the transfer of a dimethylallyl group onto the adenine at position 37 in tRNAs that read codons beginning with uridine, leading to the formation of N6-(dimethylallyl)adenosine (i(6)A). The sequence is that of tRNA dimethylallyltransferase from Nitrosococcus oceani (strain ATCC 19707 / BCRC 17464 / JCM 30415 / NCIMB 11848 / C-107).